The sequence spans 375 residues: Growth/differentiation factor 8 (375 aa).

An N-terminal signal peptide occupies residues 1 to 18 (MQKLQIFVYIYLFVLIVA). Positions 19–266 (GPVDLNENSE…VTDTPKRSRR (248 aa)) are excised as a propeptide. N-linked (GlcNAc...) asparagine glycosylation is found at Asn-48 and Asn-71. 4 disulfides stabilise this stretch: Cys-272-Cys-282, Cys-281-Cys-340, Cys-309-Cys-372, and Cys-313-Cys-374.

This sequence belongs to the TGF-beta family. As to quaternary structure, homodimer; disulfide-linked. Interacts with WFIKKN2, leading to inhibit its activity. Interacts with FSTL3. Synthesized as large precursor molecule that undergoes proteolytic cleavage to generate an N-terminal propeptide and a disulfide linked C-terminal dimer, which is the biologically active molecule. The circulating form consists of a latent complex of the C-terminal dimer and other proteins, including its propeptide, which maintain the C-terminal dimer in a latent, inactive state. Ligand activation requires additional cleavage of the prodomain by a tolloid-like metalloproteinase.

Its subcellular location is the secreted. In terms of biological role, acts specifically as a negative regulator of skeletal muscle growth. The chain is Growth/differentiation factor 8 (MSTN) from Aepyceros melampus (Impala).